Reading from the N-terminus, the 282-residue chain is ATP synthase subunit a (282 aa).

5 consecutive transmembrane segments (helical) span residues A45–F65, I106–I126, I160–I179, L232–W252, and A253–V273.

The protein belongs to the ATPase A chain family. F-type ATPases have 2 components, CF(1) - the catalytic core - and CF(0) - the membrane proton channel. CF(1) has five subunits: alpha(3), beta(3), gamma(1), delta(1), epsilon(1). CF(0) has three main subunits: a(1), b(2) and c(9-12). The alpha and beta chains form an alternating ring which encloses part of the gamma chain. CF(1) is attached to CF(0) by a central stalk formed by the gamma and epsilon chains, while a peripheral stalk is formed by the delta and b chains.

It localises to the cell inner membrane. In terms of biological role, key component of the proton channel; it plays a direct role in the translocation of protons across the membrane. The chain is ATP synthase subunit a from Marinomonas sp. (strain MWYL1).